A 288-amino-acid polypeptide reads, in one-letter code: Ribosomal RNA small subunit methyltransferase A (288 aa).

S-adenosyl-L-methionine is bound by residues asparagine 18, leucine 20, glycine 45, glutamate 66, aspartate 91, and asparagine 118.

The protein belongs to the class I-like SAM-binding methyltransferase superfamily. rRNA adenine N(6)-methyltransferase family. RsmA subfamily.

Its subcellular location is the cytoplasm. It catalyses the reaction adenosine(1518)/adenosine(1519) in 16S rRNA + 4 S-adenosyl-L-methionine = N(6)-dimethyladenosine(1518)/N(6)-dimethyladenosine(1519) in 16S rRNA + 4 S-adenosyl-L-homocysteine + 4 H(+). Its function is as follows. Specifically dimethylates two adjacent adenosines (A1518 and A1519) in the loop of a conserved hairpin near the 3'-end of 16S rRNA in the 30S particle. May play a critical role in biogenesis of 30S subunits. This is Ribosomal RNA small subunit methyltransferase A from Pasteurella multocida (strain Pm70).